Reading from the N-terminus, the 396-residue chain is Phosphoglycerate kinase (396 aa).

Substrate is bound by residues aspartate 21–asparagine 23, arginine 36, histidine 59–lysine 62, arginine 119, and arginine 156. Residues lysine 206, glycine 294, glutamate 325, and glycine 352–serine 355 each bind ATP.

This sequence belongs to the phosphoglycerate kinase family. Monomer.

The protein localises to the cytoplasm. The catalysed reaction is (2R)-3-phosphoglycerate + ATP = (2R)-3-phospho-glyceroyl phosphate + ADP. Its pathway is carbohydrate degradation; glycolysis; pyruvate from D-glyceraldehyde 3-phosphate: step 2/5. This is Phosphoglycerate kinase from Listeria monocytogenes serovar 1/2a (strain ATCC BAA-679 / EGD-e).